A 394-amino-acid polypeptide reads, in one-letter code: Elongation factor Tu (394 aa).

One can recognise a tr-type G domain in the interval 10–204 (KPHVNVGTIG…HLDSYIPEPE (195 aa)). The tract at residues 19 to 26 (GHVDHGKT) is G1. GTP is bound at residue 19–26 (GHVDHGKT). Residue T26 participates in Mg(2+) binding. Residues 60 to 64 (GITIN) are G2. Residues 81-84 (DCPG) are G3. GTP is bound by residues 81 to 85 (DCPGH) and 136 to 139 (NKCD). The G4 stretch occupies residues 136–139 (NKCD). The segment at 174-176 (SAL) is G5.

It belongs to the TRAFAC class translation factor GTPase superfamily. Classic translation factor GTPase family. EF-Tu/EF-1A subfamily. As to quaternary structure, monomer.

It localises to the cytoplasm. The catalysed reaction is GTP + H2O = GDP + phosphate + H(+). GTP hydrolase that promotes the GTP-dependent binding of aminoacyl-tRNA to the A-site of ribosomes during protein biosynthesis. The sequence is that of Elongation factor Tu from Haemophilus ducreyi (strain 35000HP / ATCC 700724).